Reading from the N-terminus, the 397-residue chain is Dual-specificity RNA methyltransferase RlmN (397 aa).

Residue glutamate 120 is the Proton acceptor of the active site. The region spanning glutamate 126–leucine 369 is the Radical SAM core domain. The cysteines at positions 133 and 372 are disulfide-linked. Residues cysteine 140, cysteine 144, and cysteine 147 each contribute to the [4Fe-4S] cluster site. S-adenosyl-L-methionine is bound by residues glycine 198–glutamate 199, serine 230, serine 252–histidine 254, and asparagine 329. Cysteine 372 (S-methylcysteine intermediate) is an active-site residue.

This sequence belongs to the radical SAM superfamily. RlmN family. It depends on [4Fe-4S] cluster as a cofactor.

The protein resides in the cytoplasm. It catalyses the reaction adenosine(2503) in 23S rRNA + 2 reduced [2Fe-2S]-[ferredoxin] + 2 S-adenosyl-L-methionine = 2-methyladenosine(2503) in 23S rRNA + 5'-deoxyadenosine + L-methionine + 2 oxidized [2Fe-2S]-[ferredoxin] + S-adenosyl-L-homocysteine. The catalysed reaction is adenosine(37) in tRNA + 2 reduced [2Fe-2S]-[ferredoxin] + 2 S-adenosyl-L-methionine = 2-methyladenosine(37) in tRNA + 5'-deoxyadenosine + L-methionine + 2 oxidized [2Fe-2S]-[ferredoxin] + S-adenosyl-L-homocysteine. In terms of biological role, specifically methylates position 2 of adenine 2503 in 23S rRNA and position 2 of adenine 37 in tRNAs. m2A2503 modification seems to play a crucial role in the proofreading step occurring at the peptidyl transferase center and thus would serve to optimize ribosomal fidelity. This chain is Dual-specificity RNA methyltransferase RlmN, found in Nitrobacter winogradskyi (strain ATCC 25391 / DSM 10237 / CIP 104748 / NCIMB 11846 / Nb-255).